Consider the following 1499-residue polypeptide: Condensin complex subunit 1 (1499 aa).

Disordered regions lie at residues 1-43 and 1421-1499; these read MPRK…DGLS and ITKN…MLDD. A compositionally biased stretch (low complexity) spans 1432 to 1446; sequence PTTMSGSSRTTSRAA. Acidic residues-rich tracts occupy residues 1458–1467 and 1486–1499; these read SDEDDSDSDD and ADDD…MLDD.

Belongs to the CND1 (condensin subunit 1) family. In terms of assembly, component of the condensin I complex, which contains the mix-1/SMC2 and smc-4/SMC4 heterodimer, and three non SMC subunits that probably regulate the complex: dpy-26, capg-1 and dpy-28. Within the complex, interacts with dpy-26 and smc-4. Component of the dosage compensation complex, which consist of the condensin I like components mix-1/SMC2 and dpy-27/SMC4, and the three non SMC subunits dpy-26, capg-1 and dpy-28. Within the complex, interacts with mix-1, dpy-27, dpy-26 and capg-1. Interacts with smcl-1. Post-translationally, sumoylated. Sumoylated in the context of the dosage compensation complex but not in the condensin I complex. Sumoylation is important for assembly of the dosage compensation complex and its robust binding to the X chromosome. As to expression, expressed in somatic and germline tissues (at protein level).

It is found in the nucleus. The protein resides in the chromosome. In terms of biological role, required for both chromosome condensation and segregation during mitosis and meiosis and X-chromosome dosage compensation depending on its binding partners. Regulatory subunit of the condensin I complex, a complex required for conversion of interphase chromatin into mitotic-like condense chromosomes. The condensin I complex probably introduces positive supercoils into relaxed DNA in the presence of type I topoisomerases and converts nicked DNA into positive knotted forms in the presence of type II topoisomerases. The condensin I complex function is required for proper chromosome segregation in mitosis and meiosis. As a member of the condensin I complex, further controls the crossover number and distribution in meiosis by restricting double strand break formation, possibly by influencing higher-order chromosome structure. Plays a role in robust cytokinesis upon presence of chromatin obstructions. Also a member of the condensin I-like dosage compensation complex that associates specifically with hermaphrodite X chromosomes to reduce their gene transcription during interphase, possibly through chromatin reorganization. This chain is Condensin complex subunit 1, found in Caenorhabditis elegans.